A 536-amino-acid chain; its full sequence is METSSSSPVKPRRKDKDEDGRAEQEDSADQVGEPHRKLLRLGDILETNEVLLNEAYQQPELTKWLQTAWTEEKSQGTKETQTGAQVFSDPFQICLLPGMLEKGQSQALVAEIIQKVQWSRKQMDLYEFYQSADLSNMPACRLLTNFLQVLRKQVRPWLEKVTNLKLDYVSASCSMYTCGDYLLVHDDLLKDRQVAFIYYLSPWEGAEEWTDEQGGCLEIFGSDDQCFPQFPVQRKIAPKDNQFAFFKVGSRSFHQVGEVTTFDYPRLTINGWFHGDTNEAFVADSLRAFPRLNYLQPDGLNRPPLGLFLNNVYLKGATRRSIQKRIEENSEICLYEFFKREKFELARSQLLADSDTLKWRRQGPANAHNYEVLDLTTARGTILELLQLFRSHAMFDLLRDFTDLDLAGTDAESPTCSVELQRWSHGNYTVLGDGLTSEENTLDLVYYLNAAEGAAVITYLAPDAEMPTAKAPTDGRRSDYDDEEEDDSVLLTITPVDNALNIVYRCEGTTKFTKYVSRNTPLEKGPVFVISCSYKE.

The interval 1–35 (METSSSSPVKPRRKDKDEDGRAEQEDSADQVGEPH) is disordered. A compositionally biased stretch (basic and acidic residues) spans 14–24 (KDKDEDGRAEQ). The region spanning 165–275 (KLDYVSASCS…RLTINGWFHG (111 aa)) is the Fe2OG dioxygenase domain. Positions 185 and 187 each coordinate Fe cation. Tyr-199 contributes to the 2-oxoglutarate binding site. A Fe cation-binding site is contributed by His-254. Arg-266 is a binding site for 2-oxoglutarate. The disordered stretch occupies residues 467 to 486 (PTAKAPTDGRRSDYDDEEED).

Belongs to the TPA1 family. As to quaternary structure, monomer. It depends on Fe(2+) as a cofactor. L-ascorbate serves as cofactor. As to expression, in third-instar larval tissues,highly expressed in the fat body, with significant expression in other organs including the brain, salivary glands, imaginal disks and gut.

The protein resides in the nucleus. It localises to the cytoplasm. It catalyses the reaction [ribosomal protein uS12]-L-proline + 2-oxoglutarate + O2 = [ribosomal protein uS12]-(3S)-3-hydroxy-L-proline + succinate + CO2. Prolyl 3-hydroxylase that catalyzes 3-hydroxylation of 'Pro-62' of small ribosomal subunit uS12 (RpS23), thereby regulating protein translation termination efficiency. In Drosophila melanogaster (Fruit fly), this protein is Prolyl 3-hydroxylase sudestada1 (sud1).